The chain runs to 93 residues: MKTLILLSALVLLAFQVQADPIQNTDEETKTEEQPGEEDQAVSVSFGDPEGTSLQEESLRDLVCYCRARGCKGRERMNGTCRKGHLLYMLCCR.

The first 19 residues, 1–19 (MKTLILLSALVLLAFQVQA), serve as a signal peptide directing secretion. Residues 20–60 (DPIQNTDEETKTEEQPGEEDQAVSVSFGDPEGTSLQEESLR) constitute a propeptide that is removed on maturation. The segment at 23-54 (QNTDEETKTEEQPGEEDQAVSVSFGDPEGTSL) is disordered. 3 disulfide bridges follow: Cys-64–Cys-92, Cys-66–Cys-81, and Cys-71–Cys-91.

Belongs to the alpha-defensin family. In terms of tissue distribution, paneth cells of the small bowel.

It localises to the secreted. Its function is as follows. Has broad-spectrum antimicrobial properties. Has antibacterial activity against the Gram-positive bacterium L.monocytogenes EGD and the Gram-negative bacteria E.coli ML-35p and avirulent S.typhimurium 7953, but not against the mouse-virulent S.typhimurium 14028S. Probably contributes to the antimicrobial barrier function of the small bowel mucosa. The polypeptide is Alpha-defensin 6/12 (Defa6) (Mus musculus (Mouse)).